The following is a 747-amino-acid chain: DNA repair and recombination protein RAD54-like (747 aa).

The interval 1-41 (MRRSLAPSQLAKRKPEGRSCDDEDWQPGLVTPRKRKSSSET) is disordered. The segment at 2-9 (RRSLAPSQ) is required for chromatin remodeling, strand pairing activities and coupling of ATPase activity. At Ser-38 the chain carries Phosphoserine. Residues 170-345 (SRRIPGSHGC…FSLVHFVNSG (176 aa)) enclose the Helicase ATP-binding domain. Residue 183–190 (DEMGLGKT) coordinates ATP. The DEGH box signature appears at 296–299 (DEGH). Residues 500-653 (VLDYILAVTR…CVVDEEQDVE (154 aa)) enclose the Helicase C-terminal domain. Lys-515 bears the N6-acetyllysine mark. Ser-572 is subject to Phosphoserine; by NEK1.

Belongs to the SNF2/RAD54 helicase family. Homohexamer. Interacts (via N-terminus) with RAD51. Interacts with NAP1L1. Interacts with BRD9; this interaction orchestrates RAD51-RAD54 complex formation. In terms of processing, acetylated. Acetylation promotes interaction with BRD9, and subsequently with RAD54, which is essential for homologous recombination (HR). Post-translationally, phosphorylated. Phosphorylation at Ser-572 by NEK1 specifically in G2 phase allows efficient removal of RAD51 filaments from DNA.

It is found in the nucleus. The catalysed reaction is ATP + H2O = ADP + phosphate + H(+). Its function is as follows. Plays an essential role in homologous recombination (HR) which is a major pathway for repairing DNA double-strand breaks (DSBs), single-stranded DNA (ssDNA) gaps, and stalled or collapsed replication forks. Acts as a molecular motor during the homology search and guides RAD51 ssDNA along a donor dsDNA thereby changing the homology search from the diffusion-based mechanism to a motor-guided mechanism. Also plays an essential role in RAD51-mediated synaptic complex formation which consists of three strands encased in a protein filament formed once homology is recognized. Once DNA strand exchange occured, dissociates RAD51 from nucleoprotein filaments formed on dsDNA. In Homo sapiens (Human), this protein is DNA repair and recombination protein RAD54-like (RAD54L).